Reading from the N-terminus, the 399-residue chain is MAKEKFNRTKPHVNIGTIGHVDHGKTTLSAAISAVLSLKGLAEMKDYDNIDNAPEEKERGITIATSHIEYETENRHYAHVDCPGHADYVKNMITGAAQMDGAILVVSAADGPMPQTREHILLSRQVGVPHIVVFLNKQDMVDDQELLELVEMEVRELLSAYEFPGDDTPIIAGSALRALEEAKAGNVGEWGEKVLKLMAEVDAYIPTPERDTEKTFLMPVEDVFSIAGRGTVVTGRIERGVVKVGDEVEIVGIRATQKTTVTGVEMFRKELEKGEAGDNVGVLLRGTKKEEVERGMVLCKPGSITPHKKFEGEIYVLSKEEGGRHTPFFTNYRPQFYVRTTDVTGSITLPEGVEMVMPGDNVKITVELISPVALELGTKFAIREGGRTVGAGVVSNIIE.

A tr-type G domain is found at 10 to 209 (KPHVNIGTIG…EVDAYIPTPE (200 aa)). Residues 19–26 (GHVDHGKT) are G1. Residue 19-26 (GHVDHGKT) participates in GTP binding. Thr-26 is a Mg(2+) binding site. A G2 region spans residues 60 to 64 (GITIA). A G3 region spans residues 81–84 (DCPG). Residues 81–85 (DCPGH) and 136–139 (NKQD) each bind GTP. The segment at 136–139 (NKQD) is G4. The tract at residues 174–176 (SAL) is G5.

The protein belongs to the TRAFAC class translation factor GTPase superfamily. Classic translation factor GTPase family. EF-Tu/EF-1A subfamily. As to quaternary structure, monomer.

The protein resides in the cytoplasm. It carries out the reaction GTP + H2O = GDP + phosphate + H(+). GTP hydrolase that promotes the GTP-dependent binding of aminoacyl-tRNA to the A-site of ribosomes during protein biosynthesis. This is Elongation factor Tu from Helicobacter pylori (strain G27).